We begin with the raw amino-acid sequence, 187 residues long: Large ribosomal subunit protein uL5 (187 aa).

Belongs to the universal ribosomal protein uL5 family. As to quaternary structure, part of the 50S ribosomal subunit; part of the 5S rRNA/L5/L18/L25 subcomplex. Contacts the 5S rRNA and the P site tRNA. Forms a bridge to the 30S subunit in the 70S ribosome.

In terms of biological role, this is one of the proteins that bind and probably mediate the attachment of the 5S RNA into the large ribosomal subunit, where it forms part of the central protuberance. In the 70S ribosome it contacts protein S13 of the 30S subunit (bridge B1b), connecting the 2 subunits; this bridge is implicated in subunit movement. Contacts the P site tRNA; the 5S rRNA and some of its associated proteins might help stabilize positioning of ribosome-bound tRNAs. The chain is Large ribosomal subunit protein uL5 from Malacoplasma penetrans (strain HF-2) (Mycoplasma penetrans).